The following is a 341-amino-acid chain: MVKVYYNGDANEAYIQGKKVAIIGYGSQGHAHAQNLRDSGVEVIIGLRKGKSWEKAEQDGFVVLPVSEATKQADVVMILLPDEHQPKVYKEEIAPNLQPGNALVFAHGFNIHFNQIVPPSDVDVFLVAPKGPGHLVRRTYTEGAGVPALIAVYQDVSGEAKETALAYAKAIGSARAGVIETTFKEETETDLFGEQAVLCGGLTALVKAGFETLVEAGYQPEIAYFECLHELKLIVDLMYEGGLAGMRYSISDTAQWGDFVTGPRIINDAVKAEMKKVLEDIQTGKFAKGWILENEANRPEFNAINRRENEHLIEVVGRELRKMMPFVNAKQKDVVTVGAKN.

The region spanning 2–181 (VKVYYNGDAN…GSARAGVIET (180 aa)) is the KARI N-terminal Rossmann domain. NADP(+) contacts are provided by residues 25–28 (YGSQ), Arg-48, Ser-52, and 82–85 (DEHQ). His-107 is an active-site residue. Position 133 (Gly-133) interacts with NADP(+). In terms of domain architecture, KARI C-terminal knotted spans 182 to 327 (TFKEETETDL…RELRKMMPFV (146 aa)). Mg(2+)-binding residues include Asp-190, Glu-194, Glu-226, and Glu-230. Ser-251 is a binding site for substrate.

The protein belongs to the ketol-acid reductoisomerase family. Mg(2+) serves as cofactor.

The enzyme catalyses (2R)-2,3-dihydroxy-3-methylbutanoate + NADP(+) = (2S)-2-acetolactate + NADPH + H(+). The catalysed reaction is (2R,3R)-2,3-dihydroxy-3-methylpentanoate + NADP(+) = (S)-2-ethyl-2-hydroxy-3-oxobutanoate + NADPH + H(+). The protein operates within amino-acid biosynthesis; L-isoleucine biosynthesis; L-isoleucine from 2-oxobutanoate: step 2/4. It functions in the pathway amino-acid biosynthesis; L-valine biosynthesis; L-valine from pyruvate: step 2/4. In terms of biological role, involved in the biosynthesis of branched-chain amino acids (BCAA). Catalyzes an alkyl-migration followed by a ketol-acid reduction of (S)-2-acetolactate (S2AL) to yield (R)-2,3-dihydroxy-isovalerate. In the isomerase reaction, S2AL is rearranged via a Mg-dependent methyl migration to produce 3-hydroxy-3-methyl-2-ketobutyrate (HMKB). In the reductase reaction, this 2-ketoacid undergoes a metal-dependent reduction by NADPH to yield (R)-2,3-dihydroxy-isovalerate. In Anoxybacillus flavithermus (strain DSM 21510 / WK1), this protein is Ketol-acid reductoisomerase (NADP(+)).